Consider the following 498-residue polypeptide: Tryptophan decarboxylase TDC2 (498 aa).

K316 is modified (N6-(pyridoxal phosphate)lysine).

Belongs to the group II decarboxylase family. The cofactor is pyridoxal 5'-phosphate.

The enzyme catalyses L-tryptophan + H(+) = tryptamine + CO2. Involved in the biosynthesis of tryptamine. Supplies tryptamine for the indole moiety of camptothecin (CPT), an anti-cancer monoterpene alkaloid. Represents a key step in monoterpene indole alkaloid biosynthesis. Is specific for tryptophan, and inactive against tyrosine, phenylalanine and 3,4-dihydroxyphenylalanine (dopa). This is Tryptophan decarboxylase TDC2 from Camptotheca acuminata (Happy tree).